The primary structure comprises 230 residues: Flagellar L-ring protein (230 aa).

Positions 1 to 22 are cleaved as a signal peptide; sequence MSPISNFARIALACTVAALLGG. Cys-23 is lipidated: N-palmitoyl cysteine. Cys-23 carries the S-diacylglycerol cysteine lipid modification.

This sequence belongs to the FlgH family. In terms of assembly, the basal body constitutes a major portion of the flagellar organelle and consists of four rings (L,P,S, and M) mounted on a central rod.

It localises to the cell outer membrane. The protein localises to the bacterial flagellum basal body. Functionally, assembles around the rod to form the L-ring and probably protects the motor/basal body from shearing forces during rotation. This chain is Flagellar L-ring protein, found in Stenotrophomonas maltophilia (strain K279a).